A 137-amino-acid chain; its full sequence is Small ribosomal subunit protein uS11 (137 aa).

Residues 1–11 (MAKQAKAGAAR) show a composition bias toward low complexity. Residues 1–32 (MAKQAKAGAARRPQRGRRRERKNVPRGQAHVQ) are disordered. Residues 12 to 21 (RPQRGRRRER) are compositionally biased toward basic residues.

It belongs to the universal ribosomal protein uS11 family. In terms of assembly, part of the 30S ribosomal subunit. Interacts with proteins S7 and S18. Binds to IF-3.

In terms of biological role, located on the platform of the 30S subunit, it bridges several disparate RNA helices of the 16S rRNA. Forms part of the Shine-Dalgarno cleft in the 70S ribosome. In Herpetosiphon aurantiacus (strain ATCC 23779 / DSM 785 / 114-95), this protein is Small ribosomal subunit protein uS11.